We begin with the raw amino-acid sequence, 407 residues long: Inactive non-canonical poly(A) RNA polymerase protein Trf4-2 (407 aa).

2 residues coordinate Mg(2+): Asp-85 and Asp-87. Positions 221–280 constitute a PAP-associated domain; the sequence is LALLLIQFLDYYGRKFDFFKYGISVLGQGGCVEKARLRSTLGENNWQSVLCIEDPVTPTN. Residues 354-390 form a disordered region; the sequence is LVQPSPTGSTSPSASASASEDERSGGPATIGFGRCDD. Over residues 357 to 371 the composition is skewed to low complexity; sequence PSPTGSTSPSASASA.

This sequence belongs to the DNA polymerase type-B-like family.

The polypeptide is Inactive non-canonical poly(A) RNA polymerase protein Trf4-2 (Drosophila melanogaster (Fruit fly)).